The chain runs to 238 residues: MLCFLRGMAFVPFLLVTWSSAAFIISYVVAVLSGHVNPFLPYISDTGTTPPESGIFGFMINFSAFLGAATMYTRYKIVEKQNETCYFSTPVFNLVSLALGLVGCIGMGIVANFQELAVPVVHDGGALLAFVCGVVYTLLQSIISYKSCPQWNSLTTCHVRMAISAVSCAAVVPMIACASLISITKLEWNPKEKDYIYHVVSAICEWTVAFGFIFYFLTFIQDFQSVTLRISTEINDDF.

The next 6 membrane-spanning stretches (helical) occupy residues A9–V29, S53–T73, V91–A111, L116–Y136, M161–I181, and V200–I220.

This sequence belongs to the DRAM/TMEM150 family.

It localises to the lysosome membrane. Lysosomal modulator of autophagy that plays a central role in p53/TP53-mediated apoptosis. Not involved in p73/TP73-mediated autophagy. This is DNA damage-regulated autophagy modulator protein 1 (Dram1) from Mus musculus (Mouse).